The following is a 78-amino-acid chain: Large ribosomal subunit protein bL28 (78 aa).

The disordered stretch occupies residues 1–21 (MSRVCQVTGKSPITGNNVSHA). Over residues 8-21 (TGKSPITGNNVSHA) the composition is skewed to polar residues.

This sequence belongs to the bacterial ribosomal protein bL28 family.

This Hahella chejuensis (strain KCTC 2396) protein is Large ribosomal subunit protein bL28.